The chain runs to 131 residues: Small ribosomal subunit protein uS11 (131 aa).

The protein belongs to the universal ribosomal protein uS11 family. Part of the 30S ribosomal subunit. Interacts with proteins S7 and S18. Binds to IF-3.

Located on the platform of the 30S subunit, it bridges several disparate RNA helices of the 16S rRNA. Forms part of the Shine-Dalgarno cleft in the 70S ribosome. The sequence is that of Small ribosomal subunit protein uS11 from Wigglesworthia glossinidia brevipalpis.